Consider the following 288-residue polypeptide: Probable HTH-type transcriptional regulator STM3175 (288 aa).

In terms of domain architecture, HTH araC/xylS-type spans 14-113 (RRVCDHIERH…GQSPRRFRQS (100 aa)). DNA-binding regions (H-T-H motif) lie at residues 31 to 52 (EALSRMAHSSPFHFHRQFTTWS) and 80 to 103 (VIDIALDAGFQNPESFTRAFKTAF). The segment at 111–288 (RQSPDWLAWH…LLTDIYLPLR (178 aa)) is putative effector binding domain; binds the peptide antibiotic albicidin.

As to quaternary structure, homodimer.

In terms of biological role, probable transcription factor. The polypeptide is Probable HTH-type transcriptional regulator STM3175 (Salmonella typhimurium (strain LT2 / SGSC1412 / ATCC 700720)).